We begin with the raw amino-acid sequence, 318 residues long: Acetyl-coenzyme A carboxylase carboxyl transferase subunit alpha (318 aa).

In terms of domain architecture, CoA carboxyltransferase C-terminal spans D31–L292.

It belongs to the AccA family. In terms of assembly, acetyl-CoA carboxylase is a heterohexamer composed of biotin carboxyl carrier protein (AccB), biotin carboxylase (AccC) and two subunits each of ACCase subunit alpha (AccA) and ACCase subunit beta (AccD).

The protein localises to the cytoplasm. It catalyses the reaction N(6)-carboxybiotinyl-L-lysyl-[protein] + acetyl-CoA = N(6)-biotinyl-L-lysyl-[protein] + malonyl-CoA. It participates in lipid metabolism; malonyl-CoA biosynthesis; malonyl-CoA from acetyl-CoA: step 1/1. Its function is as follows. Component of the acetyl coenzyme A carboxylase (ACC) complex. First, biotin carboxylase catalyzes the carboxylation of biotin on its carrier protein (BCCP) and then the CO(2) group is transferred by the carboxyltransferase to acetyl-CoA to form malonyl-CoA. This Hydrogenovibrio crunogenus (strain DSM 25203 / XCL-2) (Thiomicrospira crunogena) protein is Acetyl-coenzyme A carboxylase carboxyl transferase subunit alpha.